The following is a 347-amino-acid chain: Vitellogenin-3 (347 aa).

An N-terminal signal peptide occupies residues 1-15; sequence MRGFILALVLALVGA. Asn-80 carries an N-linked (GlcNAc...) asparagine glycan. A compositionally biased stretch (low complexity) spans 104-118; that stretch reads PSATPLSSSSSTDSS. 2 disordered regions span residues 104–174 and 200–234; these read PSAT…DKHC and QDPRRKVQNSSISSSSSSSSDEGISTPVSQPMFLG. Residues 124–133 are compositionally biased toward basic and acidic residues; the sequence is PGNKRDKDEI. Positions 144-163 are enriched in low complexity; that stretch reads SSSSSSSSSTGSGSSKTCSS. Residues 164–174 show a composition bias toward basic and acidic residues; that stretch reads SREDSSRDKHC. Asn-208 is a glycosylation site (N-linked (GlcNAc...) asparagine). Over residues 209–219 the composition is skewed to low complexity; sequence SSISSSSSSSS.

In terms of processing, phosvitin, an egg yolk storage protein, is one of the most highly phosphorylated (10%) proteins in nature. Post-translationally, cathepsin D is responsible for intraoocytic processing of vitellogenin. May contain intrachain disulfide bonds. Produced by the liver, secreted into the blood and then sequestered by receptor mediated endocytosis into growing oocytes, where it is generally cleaved, giving rise to the respective yolk components.

In terms of biological role, precursor of the egg-yolk proteins that are sources of nutrients during early development of oviparous organisms. Functionally, phosvitin is believed to be of importance in sequestering calcium, iron and other cations for the developing embryo. The sequence is that of Vitellogenin-3 (VTG3) from Gallus gallus (Chicken).